We begin with the raw amino-acid sequence, 834 residues long: DNA polymerase I, thermostable (834 aa).

The region spanning 176-262 is the 5'-3' exonuclease domain; the sequence is KPEQWVDFRA…DLPLEVDLAQ (87 aa). The segment at 412-834 is polymerase; sequence ERLHRNLLKR…MGEDWLSAKG (423 aa).

Belongs to the DNA polymerase type-A family.

The catalysed reaction is DNA(n) + a 2'-deoxyribonucleoside 5'-triphosphate = DNA(n+1) + diphosphate. Has 5'-3' exonuclease activity and no 3'-5' exonuclease activity. The chain is DNA polymerase I, thermostable (polA) from Thermus caldophilus.